A 469-amino-acid polypeptide reads, in one-letter code: Tryptophan biosynthesis protein TrpCF (469 aa).

The segment at 1–271 (MSEQLSEHIS…LAVRKIVLGE (271 aa)) is indole-3-glycerol phosphate synthase. The N-(5'-phosphoribosyl)anthranilate isomerase stretch occupies residues 272-469 (HKVCGLTHPD…QQVFQQLRNY (198 aa)).

In the N-terminal section; belongs to the TrpC family. The protein in the C-terminal section; belongs to the TrpF family. As to quaternary structure, monomer.

It carries out the reaction N-(5-phospho-beta-D-ribosyl)anthranilate = 1-(2-carboxyphenylamino)-1-deoxy-D-ribulose 5-phosphate. It catalyses the reaction 1-(2-carboxyphenylamino)-1-deoxy-D-ribulose 5-phosphate + H(+) = (1S,2R)-1-C-(indol-3-yl)glycerol 3-phosphate + CO2 + H2O. It participates in amino-acid biosynthesis; L-tryptophan biosynthesis; L-tryptophan from chorismate: step 3/5. The protein operates within amino-acid biosynthesis; L-tryptophan biosynthesis; L-tryptophan from chorismate: step 4/5. Functionally, bifunctional enzyme that catalyzes two sequential steps of tryptophan biosynthetic pathway. The first reaction is catalyzed by the isomerase, coded by the TrpF domain; the second reaction is catalyzed by the synthase, coded by the TrpC domain. This Vibrio cholerae serotype O1 (strain ATCC 39315 / El Tor Inaba N16961) protein is Tryptophan biosynthesis protein TrpCF (trpCF).